Consider the following 351-residue polypeptide: DNA polymerase IV (351 aa).

The UmuC domain maps to 4 to 185 (IIHVDMDCFF…LPLAKIPGVG (182 aa)). Mg(2+) contacts are provided by Asp-8 and Asp-103. Glu-104 is a catalytic residue.

It belongs to the DNA polymerase type-Y family. Monomer. Requires Mg(2+) as cofactor.

It is found in the cytoplasm. The enzyme catalyses DNA(n) + a 2'-deoxyribonucleoside 5'-triphosphate = DNA(n+1) + diphosphate. Its function is as follows. Poorly processive, error-prone DNA polymerase involved in untargeted mutagenesis. Copies undamaged DNA at stalled replication forks, which arise in vivo from mismatched or misaligned primer ends. These misaligned primers can be extended by PolIV. Exhibits no 3'-5' exonuclease (proofreading) activity. May be involved in translesional synthesis, in conjunction with the beta clamp from PolIII. This chain is DNA polymerase IV, found in Escherichia coli O9:H4 (strain HS).